The chain runs to 386 residues: MAP kinase-activated protein kinase 2 (386 aa).

The interval 1 to 29 is disordered; sequence MLSGSPGQTPPAPFPSPPPPAPAQPPPPF. Pro residues predominate over residues 8-29; the sequence is QTPPAPFPSPPPPAPAQPPPPF. Positions 50 to 311 constitute a Protein kinase domain; sequence KVTSQVLGLG…ITEFMNHPWI (262 aa). Residues 56 to 64 and K79 each bind ATP; that span reads LGLGINGKV. 125–127 serves as a coordination point for staurosporine; that stretch reads ECL. Residue D172 is the Proton acceptor of the active site. T208 bears the Phosphothreonine; by MAPK14 mark. Position 258 is a phosphoserine; by MAPK14 (S258). S314 bears the Phosphoserine; by autocatalysis mark. Positions 314-350 are autoinhibitory helix; sequence STKVPQTPLHTSRVLKEDKERWEDVKEEMTSALATMR. T320 carries the phosphothreonine; by MAPK14 modification. 2 short sequence motifs (nuclear export signal (NES)) span residues 331–354 and 342–351; these read DKERWEDVKEEMTSALATMRVDYE and MTSALATMRV. K339 participates in a covalent cross-link: Glycyl lysine isopeptide (Lys-Gly) (interchain with G-Cter in SUMO). A p38 MAPK-binding site region spans residues 352–376; sequence DYEQIKIKKIEDASNPLLLKRRKKA. 2 short sequence motifs (bipartite nuclear localization signal) span residues 357–360 and 371–375; these read KIKK and KRRKK.

The protein belongs to the protein kinase superfamily. CAMK Ser/Thr protein kinase family. Heterodimer with p38-alpha/MAPK14; this heterodimer forms a stable complex: molecules are positioned 'face to face' so that the ATP-binding sites of both kinases are at the heterodimer interface. Interacts with PHC2. Interacts with HSF1. Post-translationally, sumoylation inhibits the protein kinase activity. Phosphorylated and activated by MAP kinase p38-alpha/MAPK14 at Thr-208; Ser-258 and Thr-320. Ubiquitously expressed (at protein level).

It is found in the cytoplasm. The protein localises to the nucleus. The catalysed reaction is L-seryl-[protein] + ATP = O-phospho-L-seryl-[protein] + ADP + H(+). It catalyses the reaction L-threonyl-[protein] + ATP = O-phospho-L-threonyl-[protein] + ADP + H(+). Activated following phosphorylation by p38-alpha/MAPK14 following various stresses. Inhibited following sumoylation. Specifically inhibited by pyrrolopyridine inhibitors. Stress-activated serine/threonine-protein kinase involved in cytokine production, endocytosis, reorganization of the cytoskeleton, cell migration, cell cycle control, chromatin remodeling, DNA damage response and transcriptional regulation. Following stress, it is phosphorylated and activated by MAP kinase p38-alpha/MAPK14, leading to phosphorylation of substrates. Phosphorylates serine in the peptide sequence, Hyd-X-R-X(2)-S, where Hyd is a large hydrophobic residue. Phosphorylates ALOX5, CDC25B, CDC25C, CEP131, ELAVL1, HNRNPA0, HSP27/HSPB1, KRT18, KRT20, LIMK1, LSP1, PABPC1, PARN, PDE4A, RCSD1, RPS6KA3, TAB3 and TTP/ZFP36. Phosphorylates HSF1; leading to the interaction with HSP90 proteins and inhibiting HSF1 homotrimerization, DNA-binding and transactivation activities. Mediates phosphorylation of HSP27/HSPB1 in response to stress, leading to dissociation of HSP27/HSPB1 from large small heat-shock protein (sHsps) oligomers and impairment of their chaperone activities and ability to protect against oxidative stress effectively. Involved in inflammatory response by regulating tumor necrosis factor (TNF) and IL6 production post-transcriptionally: acts by phosphorylating AU-rich elements (AREs)-binding proteins ELAVL1, HNRNPA0, PABPC1 and TTP/ZFP36, leading to regulation of the stability and translation of TNF and IL6 mRNAs. Phosphorylation of TTP/ZFP36, a major post-transcriptional regulator of TNF, promotes its binding to 14-3-3 proteins and reduces its ARE mRNA affinity leading to inhibition of dependent degradation of ARE-containing transcripts. Phosphorylates CEP131 in response to cellular stress following ultraviolet irradiation which promotes binding of CEP131 to 14-3-3 proteins and inhibits formation of novel centriolar satellites. Also involved in late G2/M checkpoint following DNA damage through a process of post-transcriptional mRNA stabilization: following DNA damage, relocalizes from nucleus to cytoplasm and phosphorylates HNRNPA0 and PARN, leading to stabilization of GADD45A mRNA. Involved in toll-like receptor signaling pathway (TLR) in dendritic cells: required for acute TLR-induced macropinocytosis by phosphorylating and activating RPS6KA3. This is MAP kinase-activated protein kinase 2 (Mapkapk2) from Mus musculus (Mouse).